The chain runs to 313 residues: Acetaldehyde dehydrogenase 3 (313 aa).

An NAD(+)-binding site is contributed by 11–14 (SGNI). C129 functions as the Acyl-thioester intermediate in the catalytic mechanism. NAD(+) is bound by residues 160–168 (SAGPGTRAN) and N288.

The protein belongs to the acetaldehyde dehydrogenase family.

It catalyses the reaction acetaldehyde + NAD(+) + CoA = acetyl-CoA + NADH + H(+). In Rhizorhabdus wittichii (strain DSM 6014 / CCUG 31198 / JCM 15750 / NBRC 105917 / EY 4224 / RW1) (Sphingomonas wittichii), this protein is Acetaldehyde dehydrogenase 3.